Consider the following 101-residue polypeptide: NADH-quinone oxidoreductase subunit K (101 aa).

3 helical membrane passes run 4–24 (LSHY…GIFL), 30–50 (IVLL…FIAF), and 61–81 (VFVF…LAIL).

Belongs to the complex I subunit 4L family. NDH-1 is composed of 14 different subunits. Subunits NuoA, H, J, K, L, M, N constitute the membrane sector of the complex.

It localises to the cell inner membrane. The catalysed reaction is a quinone + NADH + 5 H(+)(in) = a quinol + NAD(+) + 4 H(+)(out). Functionally, NDH-1 shuttles electrons from NADH, via FMN and iron-sulfur (Fe-S) centers, to quinones in the respiratory chain. The immediate electron acceptor for the enzyme in this species is believed to be ubiquinone. Couples the redox reaction to proton translocation (for every two electrons transferred, four hydrogen ions are translocated across the cytoplasmic membrane), and thus conserves the redox energy in a proton gradient. The protein is NADH-quinone oxidoreductase subunit K of Azoarcus sp. (strain BH72).